A 334-amino-acid polypeptide reads, in one-letter code: Ornithine carbamoyltransferase (334 aa).

Carbamoyl phosphate contacts are provided by residues 57–60 (STRT), Gln-84, Arg-108, and 135–138 (HPTQ). Residues Asn-169, Asp-233, and 237-238 (SM) contribute to the L-ornithine site. Residues 275–276 (CL) and Arg-320 contribute to the carbamoyl phosphate site.

Belongs to the aspartate/ornithine carbamoyltransferase superfamily. OTCase family.

The protein resides in the cytoplasm. It carries out the reaction carbamoyl phosphate + L-ornithine = L-citrulline + phosphate + H(+). It functions in the pathway amino-acid biosynthesis; L-arginine biosynthesis; L-arginine from L-ornithine and carbamoyl phosphate: step 1/3. In terms of biological role, reversibly catalyzes the transfer of the carbamoyl group from carbamoyl phosphate (CP) to the N(epsilon) atom of ornithine (ORN) to produce L-citrulline. The protein is Ornithine carbamoyltransferase of Vibrio campbellii (strain ATCC BAA-1116).